The sequence spans 255 residues: Glutamate racemase (255 aa).

Substrate contacts are provided by residues 7 to 8 (DS) and 39 to 40 (YG). The active-site Proton donor/acceptor is Cys-70. 71-72 (NT) contacts substrate. Catalysis depends on Cys-181, which acts as the Proton donor/acceptor. Residue 182 to 183 (TH) participates in substrate binding.

Belongs to the aspartate/glutamate racemases family.

The enzyme catalyses L-glutamate = D-glutamate. It participates in cell wall biogenesis; peptidoglycan biosynthesis. Its function is as follows. Provides the (R)-glutamate required for cell wall biosynthesis. The sequence is that of Glutamate racemase from Helicobacter pylori (strain P12).